The following is a 136-amino-acid chain: Nucleoside diphosphate kinase (136 aa).

6 residues coordinate ATP: K10, F58, R86, T92, R104, and N114. Catalysis depends on H117, which acts as the Pros-phosphohistidine intermediate.

This sequence belongs to the NDK family. In terms of assembly, homotetramer. It depends on Mg(2+) as a cofactor.

The protein resides in the cytoplasm. It catalyses the reaction a 2'-deoxyribonucleoside 5'-diphosphate + ATP = a 2'-deoxyribonucleoside 5'-triphosphate + ADP. It carries out the reaction a ribonucleoside 5'-diphosphate + ATP = a ribonucleoside 5'-triphosphate + ADP. Its function is as follows. Major role in the synthesis of nucleoside triphosphates other than ATP. The ATP gamma phosphate is transferred to the NDP beta phosphate via a ping-pong mechanism, using a phosphorylated active-site intermediate. The chain is Nucleoside diphosphate kinase from Mycobacterium ulcerans (strain Agy99).